The primary structure comprises 333 residues: Cilia- and flagella-associated protein 119 (333 aa).

Over residues 1-10 (MITPSSSQSL) the composition is skewed to polar residues. 2 disordered regions span residues 1-70 (MITP…ANLF) and 309-333 (RLSS…TKTK). Phosphoserine is present on S34. Residues 44 to 58 (TDMQTESPAEATSSP) show a composition bias toward polar residues. A coiled-coil region spans residues 284–319 (IKSQLSKELRQLQQLVEERLKESEERLSSKLAALEQ).

The protein localises to the cell projection. The protein resides in the cilium. It localises to the flagellum. It is found in the cytoplasmic vesicle. Its subcellular location is the secretory vesicle. The protein localises to the acrosome. The protein resides in the cytoplasm. The chain is Cilia- and flagella-associated protein 119 from Mus musculus (Mouse).